Consider the following 104-residue polypeptide: Cell cycle protein GpsB (104 aa).

Positions 34-72 (LDVVIQDYEVFQKKIERLEQEIHQLRTEAKRAASERQTR) form a coiled coil. A compositionally biased stretch (basic and acidic residues) spans 60-71 (TEAKRAASERQT). Residues 60-82 (TEAKRAASERQTRHQTSPSVGST) form a disordered region. Residues 73 to 82 (HQTSPSVGST) are compositionally biased toward polar residues.

The protein belongs to the GpsB family. As to quaternary structure, forms polymers through the coiled coil domains. Interacts with PBP1, MreC and EzrA.

The protein resides in the cytoplasm. Its function is as follows. Divisome component that associates with the complex late in its assembly, after the Z-ring is formed, and is dependent on DivIC and PBP2B for its recruitment to the divisome. Together with EzrA, is a key component of the system that regulates PBP1 localization during cell cycle progression. Its main role could be the removal of PBP1 from the cell pole after pole maturation is completed. Also contributes to the recruitment of PBP1 to the division complex. Not essential for septum formation. This Halalkalibacterium halodurans (strain ATCC BAA-125 / DSM 18197 / FERM 7344 / JCM 9153 / C-125) (Bacillus halodurans) protein is Cell cycle protein GpsB.